The chain runs to 321 residues: Lipoyl synthase (321 aa).

Residues Cys68, Cys73, Cys79, Cys94, Cys98, Cys101, and Ser308 each coordinate [4Fe-4S] cluster. Residues 80–297 (FNHGTATFMI…KAEALAMGFT (218 aa)) form the Radical SAM core domain.

The protein belongs to the radical SAM superfamily. Lipoyl synthase family. It depends on [4Fe-4S] cluster as a cofactor.

It localises to the cytoplasm. It catalyses the reaction [[Fe-S] cluster scaffold protein carrying a second [4Fe-4S](2+) cluster] + N(6)-octanoyl-L-lysyl-[protein] + 2 oxidized [2Fe-2S]-[ferredoxin] + 2 S-adenosyl-L-methionine + 4 H(+) = [[Fe-S] cluster scaffold protein] + N(6)-[(R)-dihydrolipoyl]-L-lysyl-[protein] + 4 Fe(3+) + 2 hydrogen sulfide + 2 5'-deoxyadenosine + 2 L-methionine + 2 reduced [2Fe-2S]-[ferredoxin]. The protein operates within protein modification; protein lipoylation via endogenous pathway; protein N(6)-(lipoyl)lysine from octanoyl-[acyl-carrier-protein]: step 2/2. In terms of biological role, catalyzes the radical-mediated insertion of two sulfur atoms into the C-6 and C-8 positions of the octanoyl moiety bound to the lipoyl domains of lipoate-dependent enzymes, thereby converting the octanoylated domains into lipoylated derivatives. The protein is Lipoyl synthase of Salmonella paratyphi A (strain AKU_12601).